The primary structure comprises 333 residues: 2-haloacrylate reductase (333 aa).

153 to 159 (AAAGGMG) provides a ligand contact to NADP(+).

This sequence belongs to the zinc-containing alcohol dehydrogenase family.

The catalysed reaction is (S)-2-chloropropanoate + NADP(+) = 2-chloroacrylate + NADPH + H(+). Involved in the degradation of unsaturated organohalogen compounds. Catalyzes the NADPH-dependent reduction of the carbon-carbon double bond of 2-chloroacrylate to produce (S)-2-chloropropionate, which is probably further metabolized to (R)-lactate by (S)-2-haloacid dehalogenase. Can also use 2-bromoacrylate as substrate. Does not act on acrylate, methacrylate, 1,4-benzoquinone and 1,4-naphthoquinone. The chain is 2-haloacrylate reductase from Burkholderia sp.